A 529-amino-acid chain; its full sequence is Bifunctional purine biosynthesis protein PurH (529 aa).

The region spanning 2 to 149 (TNLVPVGRAL…KNHRFVNVVT (148 aa)) is the MGS-like domain.

Belongs to the PurH family.

The enzyme catalyses (6R)-10-formyltetrahydrofolate + 5-amino-1-(5-phospho-beta-D-ribosyl)imidazole-4-carboxamide = 5-formamido-1-(5-phospho-D-ribosyl)imidazole-4-carboxamide + (6S)-5,6,7,8-tetrahydrofolate. It catalyses the reaction IMP + H2O = 5-formamido-1-(5-phospho-D-ribosyl)imidazole-4-carboxamide. The protein operates within purine metabolism; IMP biosynthesis via de novo pathway; 5-formamido-1-(5-phospho-D-ribosyl)imidazole-4-carboxamide from 5-amino-1-(5-phospho-D-ribosyl)imidazole-4-carboxamide (10-formyl THF route): step 1/1. It functions in the pathway purine metabolism; IMP biosynthesis via de novo pathway; IMP from 5-formamido-1-(5-phospho-D-ribosyl)imidazole-4-carboxamide: step 1/1. This is Bifunctional purine biosynthesis protein PurH from Cereibacter sphaeroides (strain ATCC 17029 / ATH 2.4.9) (Rhodobacter sphaeroides).